Here is a 324-residue protein sequence, read N- to C-terminus: Fructose-1,6-bisphosphatase class 1 (324 aa).

Residues Glu88, Asp107, Leu109, and Asp110 each coordinate Mg(2+). Substrate-binding positions include 110–113 (DGSS), Asn199, and Lys265. Glu271 lines the Mg(2+) pocket.

This sequence belongs to the FBPase class 1 family. Homotetramer. Mg(2+) serves as cofactor.

It is found in the cytoplasm. The enzyme catalyses beta-D-fructose 1,6-bisphosphate + H2O = beta-D-fructose 6-phosphate + phosphate. It participates in carbohydrate biosynthesis; gluconeogenesis. This is Fructose-1,6-bisphosphatase class 1 from Neisseria meningitidis serogroup C (strain 053442).